We begin with the raw amino-acid sequence, 161 residues long: Nucleotide-binding protein Pnuc_0290 (161 aa).

Belongs to the YajQ family.

In terms of biological role, nucleotide-binding protein. The chain is Nucleotide-binding protein Pnuc_0290 from Polynucleobacter asymbioticus (strain DSM 18221 / CIP 109841 / QLW-P1DMWA-1) (Polynucleobacter necessarius subsp. asymbioticus).